The following is a 301-amino-acid chain: Beta carbonic anhydrase 5, chloroplastic (301 aa).

A chloroplast-targeting transit peptide spans 1-56; it reads MAATPTHFSVSHDPFSSTSLLNLQTQAIFGPNHSLKTTQLRIPASFRRKATNLQVM. A Phosphothreonine modification is found at Thr-65. Ser-128 carries the post-translational modification Phosphoserine. S-nitrosocysteine is present on Cys-231.

The protein belongs to the beta-class carbonic anhydrase family. As to expression, strongly expressed in aerial tissues including leaves, stems, flowers and siliques.

It is found in the plastid. The protein localises to the chloroplast. It carries out the reaction hydrogencarbonate + H(+) = CO2 + H2O. Functionally, reversible hydration of carbon dioxide. This chain is Beta carbonic anhydrase 5, chloroplastic (BCA5), found in Arabidopsis thaliana (Mouse-ear cress).